Reading from the N-terminus, the 680-residue chain is Extracellular matrix protein 2 (680 aa).

The signal sequence occupies residues 1–20; that stretch reads MKFSSLYCFLLLLIFQTDFG. The VWFC domain maps to 100–157; that stretch reads GHCLANGMIMYNKAVWSPEPCTTCLCLNGKVLCDETKCHPQMCPQTIIPEGECCPVCS. Residues 189–198 are compositionally biased toward acidic residues; it reads QLEEDEEEVK. Positions 189–293 are disordered; that stretch reads QLEEDEEEVK…RLPIPATPRG (105 aa). Positions 223–238 are enriched in basic and acidic residues; sequence QSREGKAQRPEEEGRQ. A compositionally biased stretch (acidic residues) spans 249–272; that stretch reads NEEDDDEEEEDDDDEEEDDDDEDE. A Cell attachment site motif is present at residues 275 to 277; the sequence is RGD. The 38-residue stretch at 288 to 325 folds into the LRRNT domain; the sequence is PATPRGIPSLPSMCSLSYKTISCISADLTQIPPLTAPE. 13 LRR repeats span residues 349 to 369, 375 to 396, 397 to 417, 420 to 440, 446 to 466, 467 to 488, 491 to 511, 517 to 538, 539 to 559, 563 to 583, 590 to 611, 613 to 634, and 642 to 665; these read NLER…GPKA, NLMR…LPST, LEEL…SLSD, QLVT…NSLA, SLSY…GLPA, SIEE…SFNH, KINV…APLA, NLES…LPKS, LVHL…VFGH, GLEY…DRVS, SLRE…VQEM, ALHF…QICN, and NLQH…AFSC. N-linked (GlcNAc...) asparagine glycosylation occurs at N359. An N-linked (GlcNAc...) asparagine glycan is attached at N430. N487 is a glycosylation site (N-linked (GlcNAc...) asparagine).

Belongs to the small leucine-rich proteoglycan (SLRP) family. SLRP class I subfamily. As to quaternary structure, interacts with numerous extracellular matrix proteins. Interacts with MSL1 and RASSF1.

Its subcellular location is the secreted. It localises to the extracellular space. The protein localises to the extracellular matrix. Functionally, promotes matrix assembly and cell adhesiveness. The protein is Extracellular matrix protein 2 (ECM2) of Bos taurus (Bovine).